Consider the following 543-residue polypeptide: Excitatory amino acid transporter 1 (543 aa).

Residues 1 to 47 (MTKSNGEEPRMGGRMERLQQGVRKRTLLAKKKVQSLTKEDVKSYLFR) are Cytoplasmic-facing. A helical transmembrane segment spans residues 48-68 (NAFVLLTVTAVIVGTILGFAL). Topologically, residues 69–86 (RPYKMSYREVKYFSFPGE) are extracellular. The chain crosses the membrane as a helical span at residues 87 to 108 (LLMRMLQMLVLPLIISSLVTGM). Residues 109–122 (AALDSKASGKMGMR) lie on the Cytoplasmic side of the membrane. Residues 123–145 (AVVYYMTTTIIAVVIGIIIVIII) form a helical membrane-spanning segment. Residues 146 to 236 (HPGKGTKENM…IREEMVPVPG (91 aa)) are Extracellular-facing. N206 and N216 each carry an N-linked (GlcNAc...) asparagine glycan. Residues 237-260 (SVNGVNALGLVVFSMCFGFVIGNM) traverse the membrane as a helical segment. The Cytoplasmic portion of the chain corresponds to 261-269 (KEQGQALRE). A helical transmembrane segment spans residues 270 to 297 (FFDSLNEAIMRLVAVIMWYAPLGILFLI). Over 298-318 (AGKIVEMEDMGVIGGQLAMYT) the chain is Extracellular. A helical membrane pass occupies residues 319-340 (VTVIVGLLIHAVIVLPLLYFLV). Topologically, residues 341-345 (TRKNP) are cytoplasmic. An intramembrane region (discontinuously helical) is located at residues 346–376 (WVFIGGLLQALITALGTSSSSATLPITFKCL). An L-aspartate-binding site is contributed by 363–365 (SSS). Over 377 to 385 (EENNGVDKR) the chain is Cytoplasmic. The helical transmembrane segment at 386-412 (ITRFVLPVGATINMDGTALYEALAAIF) threads the bilayer. The Na(+) site is built by G394, T396, and N398. T402 lines the L-aspartate pocket. Over 413–425 (IAQVNNFDLNFGQ) the chain is Extracellular. An intramembrane region (discontinuously helical) is located at residues 426–459 (IITISITATAASIGAAGIPQAGLVTMVIVLTSVG). 443-447 (IPQAG) contributes to the L-aspartate binding site. Over 460–472 (LPTDDITLIIAVD) the chain is Extracellular. Residues 473-494 (WFLDRLRTTTNVLGDSLGAGIV) traverse the membrane as a helical segment. The L-aspartate site is built by D476 and N483. The Na(+) site is built by N483 and D487. At 495–543 (EHLSRHELKNRDVEMGNSVIEENEMKKPYQLIAQDNEPEKPVADSETKM) the chain is on the cytoplasmic side. A Phosphoserine modification is found at S512. The interval 522–543 (PYQLIAQDNEPEKPVADSETKM) is disordered. Positions 531–543 (EPEKPVADSETKM) are enriched in basic and acidic residues.

The protein belongs to the dicarboxylate/amino acid:cation symporter (DAACS) (TC 2.A.23) family. SLC1A3 subfamily. Homotrimer. Post-translationally, glycosylated. Detected in brain, in Bergmann glia arborising into the molecular layer of the cerebellum (at protein level). Localized in brain and is highly enriched in the Purkinje cell layer in cerebellum. Intermediate level in lung, low level in spleen, skeletal muscle and testis.

The protein localises to the cell membrane. The enzyme catalyses K(+)(in) + L-glutamate(out) + 3 Na(+)(out) + H(+)(out) = K(+)(out) + L-glutamate(in) + 3 Na(+)(in) + H(+)(in). It carries out the reaction K(+)(in) + L-aspartate(out) + 3 Na(+)(out) + H(+)(out) = K(+)(out) + L-aspartate(in) + 3 Na(+)(in) + H(+)(in). The catalysed reaction is D-aspartate(out) + K(+)(in) + 3 Na(+)(out) + H(+)(out) = D-aspartate(in) + K(+)(out) + 3 Na(+)(in) + H(+)(in). Sodium-dependent, high-affinity amino acid transporter that mediates the uptake of L-glutamate and also L-aspartate and D-aspartate. Functions as a symporter that transports one amino acid molecule together with two or three Na(+) ions and one proton, in parallel with the counter-transport of one K(+) ion. Plays a redundant role in the rapid removal of released glutamate from the synaptic cleft, which is essential for terminating the postsynaptic action of glutamate. The sequence is that of Excitatory amino acid transporter 1 (Slc1a3) from Mus musculus (Mouse).